The following is a 294-amino-acid chain: UDP-3-O-acyl-N-acetylglucosamine deacetylase (294 aa).

Zn(2+) is bound by residues His75, His232, and Asp236. The active-site Proton donor is the His259.

Belongs to the LpxC family. Requires Zn(2+) as cofactor.

The enzyme catalyses a UDP-3-O-[(3R)-3-hydroxyacyl]-N-acetyl-alpha-D-glucosamine + H2O = a UDP-3-O-[(3R)-3-hydroxyacyl]-alpha-D-glucosamine + acetate. It functions in the pathway glycolipid biosynthesis; lipid IV(A) biosynthesis; lipid IV(A) from (3R)-3-hydroxytetradecanoyl-[acyl-carrier-protein] and UDP-N-acetyl-alpha-D-glucosamine: step 2/6. Functionally, catalyzes the hydrolysis of UDP-3-O-myristoyl-N-acetylglucosamine to form UDP-3-O-myristoylglucosamine and acetate, the committed step in lipid A biosynthesis. The sequence is that of UDP-3-O-acyl-N-acetylglucosamine deacetylase from Campylobacter jejuni (strain RM1221).